The primary structure comprises 391 residues: Probable inactive allantoicase (391 aa).

It belongs to the allantoicase family.

Its function is as follows. The function of this enzyme is unclear as allantoicase activity is not known to exist in mammals. In Homo sapiens (Human), this protein is Probable inactive allantoicase.